The chain runs to 130 residues: Small ribosomal subunit protein uS9 (130 aa).

Belongs to the universal ribosomal protein uS9 family.

The polypeptide is Small ribosomal subunit protein uS9 (Cupriavidus necator (strain ATCC 17699 / DSM 428 / KCTC 22496 / NCIMB 10442 / H16 / Stanier 337) (Ralstonia eutropha)).